The sequence spans 901 residues: Protein translocase subunit SecA (901 aa).

Residues Q87, 105-109, and D512 each bind ATP; that span reads GEGKT. Positions 859–901 are disordered; it reads HQDDDSAAAAALAAQTGERKVGRNDPCPCGSGKKYKQCHGRLQ. Zn(2+)-binding residues include C885, C887, C896, and H897. Positions 891–901 are enriched in basic residues; the sequence is KKYKQCHGRLQ.

It belongs to the SecA family. Monomer and homodimer. Part of the essential Sec protein translocation apparatus which comprises SecA, SecYEG and auxiliary proteins SecDF-YajC and YidC. Requires Zn(2+) as cofactor.

It localises to the cell inner membrane. It is found in the cytoplasm. It catalyses the reaction ATP + H2O + cellular proteinSide 1 = ADP + phosphate + cellular proteinSide 2.. In terms of biological role, part of the Sec protein translocase complex. Interacts with the SecYEG preprotein conducting channel. Has a central role in coupling the hydrolysis of ATP to the transfer of proteins into and across the cell membrane, serving both as a receptor for the preprotein-SecB complex and as an ATP-driven molecular motor driving the stepwise translocation of polypeptide chains across the membrane. The polypeptide is Protein translocase subunit SecA (Escherichia coli O139:H28 (strain E24377A / ETEC)).